Reading from the N-terminus, the 329-residue chain is tRNA dimethylallyltransferase (329 aa).

Residue 12–19 participates in ATP binding; the sequence is GPTSVGKT. 14–19 provides a ligand contact to substrate; that stretch reads TSVGKT. The tract at residues 37-40 is interaction with substrate tRNA; the sequence is DSRY. The disordered stretch occupies residues 306 to 329; sequence LREESDEGDVAVHQSGGGKEAPRA. The span at 320–329 shows a compositional bias: gly residues; the sequence is SGGGKEAPRA.

This sequence belongs to the IPP transferase family. As to quaternary structure, monomer. It depends on Mg(2+) as a cofactor.

The enzyme catalyses adenosine(37) in tRNA + dimethylallyl diphosphate = N(6)-dimethylallyladenosine(37) in tRNA + diphosphate. In terms of biological role, catalyzes the transfer of a dimethylallyl group onto the adenine at position 37 in tRNAs that read codons beginning with uridine, leading to the formation of N6-(dimethylallyl)adenosine (i(6)A). This Thermomicrobium roseum (strain ATCC 27502 / DSM 5159 / P-2) protein is tRNA dimethylallyltransferase.